The primary structure comprises 122 residues: Large ribosomal subunit protein uL24 (122 aa).

This sequence belongs to the universal ribosomal protein uL24 family. Part of the 50S ribosomal subunit.

Functionally, one of two assembly initiator proteins, it binds directly to the 5'-end of the 23S rRNA, where it nucleates assembly of the 50S subunit. Its function is as follows. Located at the polypeptide exit tunnel on the outside of the subunit. This Methanosarcina mazei (strain ATCC BAA-159 / DSM 3647 / Goe1 / Go1 / JCM 11833 / OCM 88) (Methanosarcina frisia) protein is Large ribosomal subunit protein uL24.